The chain runs to 875 residues: MIGCGACEPEVKMAGGQAAAALPTWKMAARRSLSARGRGVLQAAAGRLLPLLLLSCCCSAGGCTAAGENEETVIIGLRLEDTNDVSFMEGGALRVSERTRVKLRVYGQNINNETWSRIAFTEHERRRHTPGERGLGGPAPPEPDSGPQRCGIRTSDIIILPHIILNRRTSGIIEIEIKPLRKMEKSKSYYLCTSLSTPALGAGGSGSASGTVGGKGGAGVAGLPPPPWAETTWIYHDGEDTKMIVGEEKKFLLPFWLQVIFISLLLCLSGMFSGLNLGLMALDPMELRIVQNCGTEKEKNYAKRIEPVRRQGNYLLCSLLLGNVLVNTTLTILLDDIAGSGLVAVVVSTIGIVIFGEIVPQAICSRHGLAVGANTIFLTKFFMMMTFPASYPVSKLLDCVLGQEIGTVYNREKLLEMLRVTDPYNDLVKEELNIIQGALELRTKTVEDVMTPLRDCFMITGEAILDFNTMSEIMESGYTRIPVFEGERSNIVDLLFVKDLAFVDPDDCTPLKTITKFYNHPLHFVFNDTKLDAMLEEFKKGKSHLAIVQRVNNEGEGDPFYEVLGIVTLEDVIEEIIKSEILDETDLYTDNRTKKKVAHRERKQDFSAFKQTDSETKVKISPQLLLAMHRFLATEVEAFSPSQMSEKILLRLLKHPNVIQELKYDEKNKKAPECYLYQRNKPVDYFVLILQGKVEVEAGKEGMKFEASAFSYYGVMALTASPVPLSLSRTFVVSRTEVLAAGSPGENKSPPRPCGLNHSDSLSRSDRIDAMTPTLGSSNNQLSSSFLQVYIPDYSVRALSDLQFVKISRQQYQNALMASRMDKTPQSSDSENTKIELTLTEMHDGLPDETANLLNEQNCVSHNKANHSLHSEGAI.

At 1-250 (MIGCGACEPE…TKMIVGEEKK (250 aa)) the chain is on the extracellular side. Residue Asn112 is glycosylated (N-linked (GlcNAc...) asparagine). Residues 122-148 (EHERRRHTPGERGLGGPAPPEPDSGPQ) are disordered. The chain crosses the membrane as a helical span at residues 251–271 (FLLPFWLQVIFISLLLCLSGM). The 181-residue stretch at 251–431 (FLLPFWLQVI…DPYNDLVKEE (181 aa)) folds into the CNNM transmembrane domain. The Cytoplasmic portion of the chain corresponds to 272–313 (FSGLNLGLMALDPMELRIVQNCGTEKEKNYAKRIEPVRRQGN). The segment at residues 314–334 (YLLCSLLLGNVLVNTTLTILL) is an intramembrane region (helical). Residues 335–338 (DDIA) are Cytoplasmic-facing. A helical membrane pass occupies residues 339–359 (GSGLVAVVVSTIGIVIFGEIV). Topologically, residues 360–368 (PQAICSRHG) are extracellular. A helical membrane pass occupies residues 369 to 389 (LAVGANTIFLTKFFMMMTFPA). The Cytoplasmic segment spans residues 390 to 875 (SYPVSKLLDC…NHSLHSEGAI (486 aa)). CBS domains follow at residues 450–511 (MTPL…CTPL) and 518–584 (YNHP…ILDE). Residues 741–763 (AGSPGENKSPPRPCGLNHSDSLS) form a disordered region. Ser761 carries the post-translational modification Phosphoserine.

This sequence belongs to the ACDP family.

Its subcellular location is the cell membrane. Divalent metal cation transporter. Mediates transport of divalent metal cations in an order of Mg(2+) &gt; Co(2+) &gt; Mn(2+) &gt; Sr(2+) &gt; Ba(2+) &gt; Cu(2+) &gt; Fe(2+). This is Metal transporter CNNM2 (Cnnm2) from Rattus norvegicus (Rat).